The following is a 104-amino-acid chain: MPTPESAAFLAKKPTVPPTFDGVDYNDTKRLKQAQDAIIREQWVRVMMGRLVREELSKCYYREGVNHLEKCGHLRERYLQLLSENRVQGYLFEQQNHFANQPKQ.

The protein belongs to the complex I NDUFS6 subunit family. In terms of assembly, complex I is composed of about 40 different subunits.

Its subcellular location is the mitochondrion inner membrane. Accessory subunit of the mitochondrial membrane respiratory chain NADH dehydrogenase (Complex I), that is believed not to be involved in catalysis. Complex I functions in the transfer of electrons from NADH to the respiratory chain. The immediate electron acceptor for the enzyme is believed to be ubiquinone. This Neurospora crassa (strain ATCC 24698 / 74-OR23-1A / CBS 708.71 / DSM 1257 / FGSC 987) protein is NADH-ubiquinone oxidoreductase 12 kDa subunit, mitochondrial (nuo-12.3).